A 90-amino-acid chain; its full sequence is YcgL domain-containing protein YpsIP31758_2009 (90 aa).

Positions 1–85 constitute a YcgL domain; that stretch reads MLCAIYRSPK…PPESLLKMHL (85 aa).

This Yersinia pseudotuberculosis serotype O:1b (strain IP 31758) protein is YcgL domain-containing protein YpsIP31758_2009.